The following is a 255-amino-acid chain: Probable septum site-determining protein MinC (255 aa).

The segment covering 103-115 (SHGRRPRGERSEE) has biased composition (basic and acidic residues). The interval 103–136 (SHGRRPRGERSEEAAEAVPAAAEPVPAPAASPAP) is disordered. A compositionally biased stretch (pro residues) spans 127 to 136 (VPAPAASPAP).

This sequence belongs to the MinC family. In terms of assembly, interacts with MinD and FtsZ.

Cell division inhibitor that blocks the formation of polar Z ring septums. Rapidly oscillates between the poles of the cell to destabilize FtsZ filaments that have formed before they mature into polar Z rings. Prevents FtsZ polymerization. The sequence is that of Probable septum site-determining protein MinC from Ralstonia nicotianae (strain ATCC BAA-1114 / GMI1000) (Ralstonia solanacearum).